The sequence spans 189 residues: MLNIVIFGAPGSGKGTQSERIVEKYGINHISTGDVLRAEIKNGTELGKTAKGYIDQGQLIPDELMIDILASVFDSFKDSKGVIFDGFPRTIAQAEALKKMLAERGQDVSVMLDLEVPEDELMVRLIKRGKDSGRADDNEETIKKRLHVYHSQTSPLIDWYKNEKKYQHINGLGTMDGIFADICEAVDKL.

11-16 (GSGKGT) contacts ATP. The tract at residues 31-60 (STGDVLRAEIKNGTELGKTAKGYIDQGQLI) is NMP. AMP is bound by residues Thr-32, Arg-37, 58 to 60 (QLI), 86 to 89 (GFPR), and Gln-93. The tract at residues 127–137 (KRGKDSGRADD) is LID. Arg-128 contributes to the ATP binding site. The AMP site is built by Arg-134 and Arg-145. ATP is bound at residue Gly-173.

It belongs to the adenylate kinase family. As to quaternary structure, monomer.

It is found in the cytoplasm. The catalysed reaction is AMP + ATP = 2 ADP. The protein operates within purine metabolism; AMP biosynthesis via salvage pathway; AMP from ADP: step 1/1. Its function is as follows. Catalyzes the reversible transfer of the terminal phosphate group between ATP and AMP. Plays an important role in cellular energy homeostasis and in adenine nucleotide metabolism. This Bacteroides thetaiotaomicron (strain ATCC 29148 / DSM 2079 / JCM 5827 / CCUG 10774 / NCTC 10582 / VPI-5482 / E50) protein is Adenylate kinase.